The following is a 62-amino-acid chain: Conotoxin reg3.7 (62 aa).

An N-terminal signal peptide occupies residues 1-15 (RVLLTICLLLFPLSA). A propeptide spanning residues 16–45 (LPLDGDQPADQPARHMQSAERNPRFDPVKR) is cleaved from the precursor. Residues 17-37 (PLDGDQPADQPARHMQSAERN) form a disordered region. Disulfide bonds link C46–C60, C47–C58, and C52–C61. C61 carries the cysteine amide modification.

It belongs to the conotoxin M superfamily. In terms of tissue distribution, expressed by the venom duct.

It is found in the secreted. The sequence is that of Conotoxin reg3.7 from Conus regius (Crown cone).